The sequence spans 52 residues: Ovomucoid (52 aa).

The Kazal-like domain maps to 2 to 52 (VDCSEYPKPACPKDYRPVCGSDNKTYGNKCNFCNAVVESNGTLTLNRFGKC). 3 disulfide bridges follow: Cys4-Cys34, Cys12-Cys31, and Cys20-Cys52. The N-linked (GlcNAc...) asparagine glycan is linked to Asn41.

The protein localises to the secreted. This chain is Ovomucoid, found in Coturnix delegorguei (Harlequin quail).